Reading from the N-terminus, the 292-residue chain is uncharacterized protein (292 aa).

Residues 13 to 35 traverse the membrane as a helical segment; sequence LFILFIIVVCIYLLPRVAINAFY.

It belongs to the serine esterase family.

The protein localises to the membrane. This is an uncharacterized protein from Salmonella typhi.